A 156-amino-acid chain; its full sequence is ATP synthase subunit b (156 aa).

The helical transmembrane segment at 12–32 threads the bilayer; sequence VAFFIFVLFCMKFVWPPVIAA.

The protein belongs to the ATPase B chain family. As to quaternary structure, F-type ATPases have 2 components, F(1) - the catalytic core - and F(0) - the membrane proton channel. F(1) has five subunits: alpha(3), beta(3), gamma(1), delta(1), epsilon(1). F(0) has three main subunits: a(1), b(2) and c(10-14). The alpha and beta chains form an alternating ring which encloses part of the gamma chain. F(1) is attached to F(0) by a central stalk formed by the gamma and epsilon chains, while a peripheral stalk is formed by the delta and b chains.

It is found in the cell inner membrane. F(1)F(0) ATP synthase produces ATP from ADP in the presence of a proton or sodium gradient. F-type ATPases consist of two structural domains, F(1) containing the extramembraneous catalytic core and F(0) containing the membrane proton channel, linked together by a central stalk and a peripheral stalk. During catalysis, ATP synthesis in the catalytic domain of F(1) is coupled via a rotary mechanism of the central stalk subunits to proton translocation. Its function is as follows. Component of the F(0) channel, it forms part of the peripheral stalk, linking F(1) to F(0). The chain is ATP synthase subunit b from Pseudomonas syringae pv. syringae (strain B728a).